Here is a 185-residue protein sequence, read N- to C-terminus: MIEEALFDAEEKMEKAVSVAKDDLGTIRTGRANPGMFARVVVDYYGSPTPVTQMSSITVPEPRMVVIKPYEAGQLGAIETAIRNSDLGVNPTNNGDILRITIPQLTEERRRELVKQAKGKGEDAKVAIRNVRRKAMDELARIQKDGEAGEDEVGRAEKELDKTTAKYVSQIDELVKHKEAELLEV.

The protein belongs to the RRF family.

The protein resides in the cytoplasm. Functionally, responsible for the release of ribosomes from messenger RNA at the termination of protein biosynthesis. May increase the efficiency of translation by recycling ribosomes from one round of translation to another. The polypeptide is Ribosome-recycling factor (Nocardia farcinica (strain IFM 10152)).